The chain runs to 1279 residues: Sterol regulatory element-binding protein cleavage-activating protein (1279 aa).

Over 1–18 (MTLTERLREKISRAFYNH) the chain is Cytoplasmic. A helical transmembrane segment spans residues 19–39 (GLLCASYPIPIILFTGFCILA). Residues 40-279 (CCYPLLKLPL…SLVHVHFKEE (240 aa)) lie on the Lumenal side of the membrane. The loop-1 stretch occupies residues 46 to 284 (KLPLPGTGPV…HFKEEIGVAE (239 aa)). A disordered region spans residues 60–80 (PVKDYSPPPVDSDRKQGEPTE). N-linked (GlcNAc...) asparagine glycosylation is present at asparagine 263. Residues 280–300 (IGVAELIPLVTTYIILFAYIY) form a helical membrane-spanning segment. In terms of domain architecture, SSD spans 284 to 442 (ELIPLVTTYI…MLFFTTVLSI (159 aa)). Over 301–312 (FSTRKIDMVKSK) the chain is Cytoplasmic. The chain crosses the membrane as a helical span at residues 313-333 (WGLALAAVVTVLSSLLMSVGL). At 334-344 (CTLFGLTPTLN) the chain is on the lumenal side. A helical transmembrane segment spans residues 345 to 365 (GGEIFPYLVVVIGLENVLVLT). Residues 366-401 (KSVVSTPVDLEVKLRIAQGLSSESWSIMKNMATELG) are Cytoplasmic-facing. The helical transmembrane segment at 402–422 (IILIGYFTLVPAIQEFCLFAV) threads the bilayer. A topological domain (lumenal) is located at residue valine 423. The chain crosses the membrane as a helical span at residues 424 to 444 (GLVSDFFLQMLFFTTVLSIDI). The Cytoplasmic segment spans residues 445-518 (RRMELADLNK…FLARTRLAQR (74 aa)). Positions 447–452 (MELADL) match the ER export signal motif. Residues lysine 454 and lysine 466 each participate in a glycyl lysine isopeptide (Lys-Gly) (interchain with G-Cter in ubiquitin) cross-link. The helical transmembrane segment at 519 to 539 (LIMAGTVVWIGILVYTDPAGL) threads the bilayer. The interval 535–710 (DPAGLRNYLA…QAHGDVTLYK (176 aa)) is loop-7. Topologically, residues 540-709 (RNYLAAQVTE…VQAHGDVTLY (170 aa)) are lumenal. The tract at residues 579-615 (IFPPDAPKLPENQTSPGESPERGGPAEVVHDSPVPEV) is disordered. 2 N-linked (GlcNAc...) asparagine glycosylation sites follow: asparagine 590 and asparagine 641. The disordered stretch occupies residues 668–696 (EGRHPQDGRSAWPPPGPIPAGHWEAGPKG). Residues 710–730 (KVAALGLATGIVLVLLLLCLY) form a helical membrane-spanning segment. At 731 to 1279 (RVLCPRNYGQ…YVPSVLEKLD (549 aa)) the chain is on the cytoplasmic side. Residues 731–1279 (RVLCPRNYGQ…YVPSVLEKLD (549 aa)) are interaction with SREBF2. The stretch at 771–811 (VLRGHLMDIECLASDGMLLVSCCLAGHVCVWDAQTGDCLTR) is one WD 1 repeat. Positions 811–904 (RIPRPGRQRR…PRHRAVCGRS (94 aa)) are disordered. Phosphoserine occurs at positions 822, 838, and 851. The segment covering 877-891 (IDTNFSAQPRSSQPT) has biased composition (polar residues). A phosphoserine mark is found at serine 907 and serine 937. The disordered stretch occupies residues 931–962 (PALRPPSPGPVLSQAPEDEGGSPEKGSPSLAW). 2 WD repeats span residues 952 to 1002 (SPEK…LCCS) and 1005 to 1042 (EVSS…ALSP). Residue arginine 1051 is modified to Omega-N-methylarginine. WD repeat units follow at residues 1077–1114 (AHQK…CLFT), 1117–1155 (GHSG…RVSH), 1158–1195 (AHRG…KFYS), and 1197–1235 (QQDL…LLQT).

The protein belongs to the WD repeat SCAP family. As to quaternary structure, membrane region forms a homotetramer. Component of the SCAP-SREBP complex (composed of SCAP and SREBF1/SREBP1 or SREBF2/SREBP2); interacts with SREBF1/SREBP1 or SREBF2/SREBP2 through its C-terminal cytoplasmic domain. Forms a ternary complex with INSIG1 or INSIG2 through its transmembrane domains at high sterol concentrations. Interacts with PAQR3; the interaction anchors the SCAP-SREBP complex to the Golgi apparatus in low cholesterol conditions. Interacts with the SEC23-SEC24 complex in a SAR1-GTP-dependent manner through an ER export signal in its third cytoplasmic loop. Interacts with RNF139; the interaction inhibits the interaction of SCAP with SEC24B and hampering the ER to Golgi transport of the SCAP-SREBP complex. Interacts with SPRING1. In terms of processing, ubiquitinated at Lys-454 and Lys-466. RNF145 triggers ubiquitination of SCAP, likely inhibiting SCAP-SREBP complex transport to the Golgi apparatus and the subsequent processing/maturation of SREBF2/SREBP2.

The protein resides in the endoplasmic reticulum membrane. It localises to the golgi apparatus membrane. Its subcellular location is the cytoplasmic vesicle. The protein localises to the COPII-coated vesicle membrane. Its function is as follows. Escort protein required for cholesterol as well as lipid homeostasis. Regulates export of the SCAP-SREBP complex from the endoplasmic reticulum to the Golgi upon low cholesterol, thereby regulating the processing of sterol regulatory element-binding proteins (SREBPs) SREBF1/SREBP1 and SREBF2/SREBP2. At high sterol concentrations, formation of a ternary complex with INSIG (INSIG1 or INSIG2) leads to mask the ER export signal in SCAP, promoting retention of the complex in the endoplasmic reticulum. Low sterol concentrations trigger release of INSIG, a conformational change in the SSD domain of SCAP, unmasking of the ER export signal, promoting recruitment into COPII-coated vesicles and transport of the SCAP-SREBP to the Golgi: in the Golgi, SREBPs are then processed, releasing the transcription factor fragment of SREBPs from the membrane, its import into the nucleus and up-regulation of LDLR, INSIG1 and the mevalonate pathway. Binds cholesterol via its SSD domain. This is Sterol regulatory element-binding protein cleavage-activating protein from Homo sapiens (Human).